The chain runs to 359 residues: Hyaluronan and proteoglycan link protein 3 (359 aa).

Positions 1–17 (MSLLFLVLLSPFPCVLG) are cleaved as a signal peptide. Residues 48 to 164 (KLVVETTEES…ESGLVELELR (117 aa)) form the Ig-like V-type domain. Intrachain disulfides connect cysteine 70/cysteine 146, cysteine 188/cysteine 259, cysteine 212/cysteine 233, cysteine 286/cysteine 355, and cysteine 311/cysteine 332. 2 consecutive Link domains span residues 166–261 (VVFP…FCFA) and 266–357 (GRVY…YCYV).

Belongs to the HAPLN family.

Its subcellular location is the secreted. The protein localises to the extracellular space. It is found in the extracellular matrix. Functionally, may function in hyaluronic acid binding. In Mus musculus (Mouse), this protein is Hyaluronan and proteoglycan link protein 3 (Hapln3).